Consider the following 489-residue polypeptide: Arginine biosynthesis bifunctional protein ArgJ 2, mitochondrial (489 aa).

The transit peptide at 1 to 11 (MLLISRIGARH) directs the protein to the mitochondrion. The substrate site is built by Thr205, Lys234, Thr245, Glu341, and Asn484. Thr245 serves as the catalytic Nucleophile.

It belongs to the ArgJ family. In terms of assembly, heterodimer of an alpha and a beta chain. In terms of processing, the alpha and beta chains are autoproteolytically processed from a single precursor protein within the mitochondrion.

The protein resides in the mitochondrion matrix. It catalyses the reaction N(2)-acetyl-L-ornithine + L-glutamate = N-acetyl-L-glutamate + L-ornithine. The enzyme catalyses L-glutamate + acetyl-CoA = N-acetyl-L-glutamate + CoA + H(+). It participates in amino-acid biosynthesis; L-arginine biosynthesis; L-ornithine and N-acetyl-L-glutamate from L-glutamate and N(2)-acetyl-L-ornithine (cyclic): step 1/1. Its pathway is amino-acid biosynthesis; L-arginine biosynthesis; N(2)-acetyl-L-ornithine from L-glutamate: step 1/4. Catalyzes two activities which are involved in the cyclic version of arginine biosynthesis: the synthesis of acetylglutamate from glutamate and acetyl-CoA, and of ornithine by transacetylation between acetylornithine and glutamate. The polypeptide is Arginine biosynthesis bifunctional protein ArgJ 2, mitochondrial (Sclerotinia sclerotiorum (strain ATCC 18683 / 1980 / Ss-1) (White mold)).